Consider the following 264-residue polypeptide: Thymidylate synthase (264 aa).

A dUMP-binding site is contributed by Arg-21. His-51 is a (6R)-5,10-methylene-5,6,7,8-tetrahydrofolate binding site. 126–127 serves as a coordination point for dUMP; it reads RR. Cys-146 (nucleophile) is an active-site residue. DUMP contacts are provided by residues 166–169, Asn-177, and 207–209; these read RSCD and HLY. Asp-169 contacts (6R)-5,10-methylene-5,6,7,8-tetrahydrofolate. Position 263 (Ala-263) interacts with (6R)-5,10-methylene-5,6,7,8-tetrahydrofolate.

This sequence belongs to the thymidylate synthase family. Bacterial-type ThyA subfamily. Homodimer.

The protein resides in the cytoplasm. It carries out the reaction dUMP + (6R)-5,10-methylene-5,6,7,8-tetrahydrofolate = 7,8-dihydrofolate + dTMP. Its pathway is pyrimidine metabolism; dTTP biosynthesis. Functionally, catalyzes the reductive methylation of 2'-deoxyuridine-5'-monophosphate (dUMP) to 2'-deoxythymidine-5'-monophosphate (dTMP) while utilizing 5,10-methylenetetrahydrofolate (mTHF) as the methyl donor and reductant in the reaction, yielding dihydrofolate (DHF) as a by-product. This enzymatic reaction provides an intracellular de novo source of dTMP, an essential precursor for DNA biosynthesis. In Edwardsiella ictaluri (strain 93-146), this protein is Thymidylate synthase.